The chain runs to 220 residues: Guanylate kinase (220 aa).

In terms of domain architecture, Guanylate kinase-like spans 15–194 (GLMLVISSPS…ALDAVQSIVK (180 aa)). 22-29 (SPSGAGKS) is an ATP binding site.

Belongs to the guanylate kinase family.

Its subcellular location is the cytoplasm. It carries out the reaction GMP + ATP = GDP + ADP. In terms of biological role, essential for recycling GMP and indirectly, cGMP. This chain is Guanylate kinase, found in Rhizobium johnstonii (strain DSM 114642 / LMG 32736 / 3841) (Rhizobium leguminosarum bv. viciae).